The following is a 116-amino-acid chain: Large ribosomal subunit protein bL19 (116 aa).

It belongs to the bacterial ribosomal protein bL19 family.

In terms of biological role, this protein is located at the 30S-50S ribosomal subunit interface and may play a role in the structure and function of the aminoacyl-tRNA binding site. This is Large ribosomal subunit protein bL19 from Actinobacillus succinogenes (strain ATCC 55618 / DSM 22257 / CCUG 43843 / 130Z).